Reading from the N-terminus, the 87-residue chain is uncharacterized protein (87 aa).

2 helical membrane-spanning segments follow: residues 8–28 (IVVL…IFDL) and 47–67 (LAGS…LIGL).

It localises to the cell membrane. This is an uncharacterized protein from Bacillus subtilis (strain 168).